Here is a 275-residue protein sequence, read N- to C-terminus: Protein FAM210A (275 aa).

The segment at 51 to 100 (KWLHSQPKQQDTATKTPVHDLPSGIQHQSEETSPSARSSISTDPSSIAEE) is disordered. Composition is skewed to polar residues over residues 56-65 (QPKQQDTATK) and 75-95 (IQHQSEETSPSARSSISTDPS). A DUF1279 domain is found at 105 to 217 (DQSIGLLKRF…GYLSTPPLVK (113 aa)). Residues 124–144 (VLIPVHLVTSSIWFGSFYYAA) traverse the membrane as a helical segment. A coiled-coil region spans residues 221–275 (QDRMEETKELFTEKMEETRDIISGKMEETKDRISEKLQETKDRVAFRKKKNEDME).

Belongs to the FAM210 family.

It is found in the membrane. It localises to the mitochondrion. The protein localises to the cytoplasm. May play a role in the structure and strength of both muscle and bone. This Xenopus laevis (African clawed frog) protein is Protein FAM210A (fam210a).